The sequence spans 69 residues: Putative membrane protein insertion efficiency factor (69 aa).

It belongs to the UPF0161 family.

Its subcellular location is the cell membrane. Could be involved in insertion of integral membrane proteins into the membrane. The sequence is that of Putative membrane protein insertion efficiency factor from Thermoanaerobacter pseudethanolicus (strain ATCC 33223 / 39E) (Clostridium thermohydrosulfuricum).